We begin with the raw amino-acid sequence, 81 residues long: Putative snRNP Sm-like protein (81 aa).

Positions 13–81 constitute a Sm domain; it reads RPLDALGNSL…RGDNIVYISP (69 aa).

It belongs to the snRNP Sm proteins family.

The polypeptide is Putative snRNP Sm-like protein (Methanothermobacter thermautotrophicus (strain ATCC 29096 / DSM 1053 / JCM 10044 / NBRC 100330 / Delta H) (Methanobacterium thermoautotrophicum)).